The primary structure comprises 140 residues: ATP synthase epsilon chain (140 aa).

Belongs to the ATPase epsilon chain family. As to quaternary structure, F-type ATPases have 2 components, CF(1) - the catalytic core - and CF(0) - the membrane proton channel. CF(1) has five subunits: alpha(3), beta(3), gamma(1), delta(1), epsilon(1). CF(0) has three main subunits: a, b and c.

It localises to the cell inner membrane. Its function is as follows. Produces ATP from ADP in the presence of a proton gradient across the membrane. The sequence is that of ATP synthase epsilon chain from Janthinobacterium sp. (strain Marseille) (Minibacterium massiliensis).